The sequence spans 434 residues: Putative ankyrin repeat protein FPV023 (434 aa).

ANK repeat units follow at residues 33 to 62 (RLKILLHKAIELRNIEAVRLLLNNDVDPVA), 134 to 163 (LTISRMEPSRQIEEIQIMDILLSKGIDINF), 167 to 197 (IGNTALHYACDYRNGLNMVRHLIKNGADINI), 201 to 230 (YGTTPLACAVSTRNIELVSILLDSGADPNS), 236 to 265 (IGTKVLHTAVGSGNFNIAKELIESGADPNI), 269 to 299 (AGVTPLHVAAIDEDSYALLELLLDNGADPNI), and 303 to 330 (NGTTPLFQAMHNYNRVKLLFMYGADINI).

This Fowlpox virus (strain NVSL) (FPV) protein is Putative ankyrin repeat protein FPV023.